Here is a 594-residue protein sequence, read N- to C-terminus: MATLSLPLPHLTQAIPARARPRPRPLRGIPARLLSCRAAMAVAPDKEEAAAVALDKAVKVAVAAPDRAAVAAVGVGEELPEGYDQMMPAVEEARRRRAGVLLHPTSLRGPHGIGDLGDEAVAFLAWLRDAGCTLWQVLPLVPPGRKSGEDGSPYSGQDANCGNTLLISLEELVKDGLLMENELPDPLDMEYVEFDTVANLKEPLIAKAAERLLLSRGELRTQYDCFKKNPNISGWLEDAALFAAIDRSIDALSWYEWPEPLKNRHLRALEDIYQKQKDFIEIFMAQQFLFQRQWQRIRKYAKKLGISIMGDMPIYVGYHSADVWANRKSFLLDKNGFPTFVSGVPPDAFSETGQLWNSPLYDWKAMEAGGFEWWIKRINRALDLYDEFRIDHFRGLAGFWAVPSESKVALVGSWRAGPRNAFFDALFKAVGRINIIAEDLGVITEDVVDLRKSIEAPGMAVLQFAFGGGSDNPHLPHNHEFDQVVYTGTHDNDTVIGWWQTLPEEEKQTVFKYLPEANRTEISWALITAALSSVARTSMVTMQDILGLDSSARMNTPATQKGNWRWRMPSSVSFDSLSPEAAKLKELLGLYNRL.

A chloroplast-targeting transit peptide spans 1 to 37; it reads MATLSLPLPHLTQAIPARARPRPRPLRGIPARLLSCR.

This sequence belongs to the disproportionating enzyme family.

It localises to the plastid. It is found in the chloroplast. Its subcellular location is the amyloplast. It catalyses the reaction Transfers a segment of a (1-&gt;4)-alpha-D-glucan to a new position in an acceptor, which may be glucose or a (1-&gt;4)-alpha-D-glucan.. In terms of biological role, chloroplastic alpha-glucanotransferase involved in maltotriose metabolism. The sequence is that of 4-alpha-glucanotransferase DPE1, chloroplastic/amyloplastic (DPE1) from Oryza sativa subsp. japonica (Rice).